We begin with the raw amino-acid sequence, 72 residues long: Translation initiation factor IF-1 (72 aa).

Positions 1 to 72 (MSKEDSIEVT…TKGRITFRHR (72 aa)) constitute an S1-like domain.

It belongs to the IF-1 family. In terms of assembly, component of the 30S ribosomal translation pre-initiation complex which assembles on the 30S ribosome in the order IF-2 and IF-3, IF-1 and N-formylmethionyl-tRNA(fMet); mRNA recruitment can occur at any time during PIC assembly.

The protein localises to the cytoplasm. One of the essential components for the initiation of protein synthesis. Stabilizes the binding of IF-2 and IF-3 on the 30S subunit to which N-formylmethionyl-tRNA(fMet) subsequently binds. Helps modulate mRNA selection, yielding the 30S pre-initiation complex (PIC). Upon addition of the 50S ribosomal subunit IF-1, IF-2 and IF-3 are released leaving the mature 70S translation initiation complex. The polypeptide is Translation initiation factor IF-1 (Solibacter usitatus (strain Ellin6076)).